A 487-amino-acid chain; its full sequence is N-succinylglutamate 5-semialdehyde dehydrogenase (487 aa).

221–226 (GSSDTG) is an NAD(+) binding site. Active-site residues include Glu244 and Cys278.

The protein belongs to the aldehyde dehydrogenase family. AstD subfamily.

The enzyme catalyses N-succinyl-L-glutamate 5-semialdehyde + NAD(+) + H2O = N-succinyl-L-glutamate + NADH + 2 H(+). The protein operates within amino-acid degradation; L-arginine degradation via AST pathway; L-glutamate and succinate from L-arginine: step 4/5. Its function is as follows. Catalyzes the NAD-dependent reduction of succinylglutamate semialdehyde into succinylglutamate. In Burkholderia ambifaria (strain ATCC BAA-244 / DSM 16087 / CCUG 44356 / LMG 19182 / AMMD) (Burkholderia cepacia (strain AMMD)), this protein is N-succinylglutamate 5-semialdehyde dehydrogenase.